Consider the following 314-residue polypeptide: PDZ domain-containing protein GIPC2 (314 aa).

Residues 1 to 12 (MPLGLRGKKKAA) show a composition bias toward basic residues. Residues 1–36 (MPLGLRGKKKAAKSKEAARLVEGERSSGSQGVPGPP) form a disordered region. Positions 13-25 (KSKEAARLVEGER) are enriched in basic and acidic residues. One can recognise a PDZ domain in the interval 117–197 (EVNVYKSEDS…EELFTLQLIE (81 aa)).

The protein belongs to the GIPC family. Probably interacts with SEMA5A. Expressed in kidney and lung (at protein level).

It is found in the cytoplasm. This is PDZ domain-containing protein GIPC2 (Gipc2) from Mus musculus (Mouse).